We begin with the raw amino-acid sequence, 64 residues long: Temporin-ALf (64 aa).

The signal sequence occupies residues 1–22; the sequence is MFTLKKSLLLLFFLGTINLSLC. A propeptide spanning residues 23 to 46 is cleaved from the precursor; the sequence is EQERNAEEERRDEPDERNAEVEKR. Position 62 is a leucine amide (Leu62).

As to expression, expressed by the skin glands.

It localises to the secreted. In terms of biological role, antimicrobial peptide with activity against Gram-positive and Gram-negative bacteria and against fungi. Has been tested against S.aureus (MIC=2.5 ug/mL), B.pumilus (MIC=5.0 ug/mL), B.cereus (MIC=30.0 ug/mL), E.coli (MIC=2.5 ug/mL), B.dysenteriae (MIC=5.0 ug/mL), A.cacoaceticus (MIC=30.0 ug/mL), P.aeruginosa (MIC=5.0 ug/mL) and C.albicans (MIC=2.5 ug/mL). Also shows a weak hemolytic activity. In Amolops loloensis (Lolokou Sucker Frog), this protein is Temporin-ALf.